Reading from the N-terminus, the 127-residue chain is Movement protein TGB2 (127 aa).

Residues Met1 to Asn24 lie on the Cytoplasmic side of the membrane. The helical transmembrane segment at Thr25–Thr45 threads the bilayer. Residues Arg46 to Asn85 lie on the Lumenal side of the membrane. A helical membrane pass occupies residues Leu86 to Leu106. At Ala107–Thr127 the chain is on the cytoplasmic side.

It belongs to the Tymovirales TGBp2 protein family.

The protein resides in the host endoplasmic reticulum membrane. Its function is as follows. Plays a role in viral cell-to-cell propagation, by facilitating genome transport to neighboring plant cells through plasmosdesmata,. The polypeptide is Movement protein TGB2 (Setaria italica (Foxtail millet)).